The sequence spans 251 residues: Derlin-1 (251 aa).

The residue at position 2 (Ser-2) is an N-acetylserine. Over 2 to 15 the chain is Cytoplasmic; the sequence is SDIGDWFRSIPAIT. A helical membrane pass occupies residues 16 to 31; the sequence is RYWFAATVAVPLVGKL. At 32–69 the chain is on the lumenal side; that stretch reads GLISPAYLFLWPEAFLYRFQIWRPITATFYFPVGPGTG. Residues 70–89 form a helical membrane-spanning segment; that stretch reads FLYLVNLYFLYQYSTRLETG. Residues 90–94 lie on the Cytoplasmic side of the membrane; sequence AFDGR. The helical transmembrane segment at 95-115 threads the bilayer; sequence PADYLFMLLFNWICIVITGLA. At 116–122 the chain is on the lumenal side; it reads MDMQLLM. Residues 123–137 traverse the membrane as a helical segment; the sequence is IPLIMSVLYVWAQLN. Topologically, residues 138–154 are cytoplasmic; sequence RDMIVSFWFGTRFKACY. The helical transmembrane segment at 155 to 166 threads the bilayer; the sequence is LPWVILGFNYII. Over 167-170 the chain is Lumenal; the sequence is GGSV. Residues 171 to 189 form a helical membrane-spanning segment; it reads INELIGNLVGHLYFFLMFR. Residues 190–251 are Cytoplasmic-facing; it reads YPMDLGGRNF…WGQGFRLGDQ (62 aa). Ser-201 bears the Phosphoserine mark. Position 202 is a phosphothreonine (Thr-202). Phosphoserine is present on Ser-226. Residues 229–251 are disordered; that stretch reads RAADQNGGGGRHNWGQGFRLGDQ. Residues 241-248 carry the SHP-box motif; sequence NWGQGFRL.

Belongs to the derlin family. Homotetramer. The four subunits of the tetramer are arranged in a twofold symmetry. Forms heterooligomers with DERL2 and DERL3; binding to DERL3 is poorer than that between DERL2 and DERL3. Interacts (via SHP-box motif) with VCP. Interacts with AMFR, SELENOS, SEL1L, SELENOK and SYVN1, as well as with SEL1L-SYVN1 and VCP-SELENOS protein complexes; this interaction is weaker than that observed between DERL2 and these complexes. Interacts with NGLY1 and YOD1. Does not bind to EDEM1. Interacts with DNAJB9. Interacts with RNF103. Interacts with HM13. Interacts with XBP1 isoform 1 (via luminal/ectodomain domain); the interaction obviates the need for ectodomain shedding prior HM13/SPP-mediated XBP1 isoform 1 cleavage. Interacts with the signal recognition particle/SRP and the SRP receptor; in the process of endoplasmic reticulum stress-induced pre-emptive quality control. May interact with UBXN6. Interacts with ZFAND2B; probably through VCP. Interacts with CCDC47. Interacts with C18orf32. May interact with TRAM1. Forms a complex with SVIP and VCP/p97. In terms of assembly, (Microbial infection) Interacts with the cytomegalovirus US11 protein. Ubiquitous.

It is found in the endoplasmic reticulum membrane. In terms of biological role, functional component of endoplasmic reticulum-associated degradation (ERAD) for misfolded lumenal proteins. Forms homotetramers which encircle a large channel traversing the endoplasmic reticulum (ER) membrane. This allows the retrotranslocation of misfolded proteins from the ER into the cytosol where they are ubiquitinated and degraded by the proteasome. The channel has a lateral gate within the membrane which provides direct access to membrane proteins with no need to reenter the ER lumen first. May mediate the interaction between VCP and the misfolded protein. Also involved in endoplasmic reticulum stress-induced pre-emptive quality control, a mechanism that selectively attenuates the translocation of newly synthesized proteins into the endoplasmic reticulum and reroutes them to the cytosol for proteasomal degradation. By controlling the steady-state expression of the IGF1R receptor, indirectly regulates the insulin-like growth factor receptor signaling pathway. Functionally, (Microbial infection) In case of infection by cytomegaloviruses, it plays a central role in the export from the ER and subsequent degradation of MHC class I heavy chains via its interaction with US11 viral protein, which recognizes and associates with MHC class I heavy chains. Also participates in the degradation process of misfolded cytomegalovirus US2 protein. The chain is Derlin-1 from Homo sapiens (Human).